Consider the following 162-residue polypeptide: MGLETEKADVQLFMDDDAYSRHSGVDYADLDKFADSGSDRDPHRLNSHLKVGFEDVIAEPVTTHSFDKVWICSHALFEISKYVIYKFLTFFLAIPMAFAAGILFAILSCLHIWIIMPFVKTCLMVLPSVQTIWKTITDVVIAPLCTSVGRSFSSISLQLSHD.

Residues 1-86 (MGLETEKADV…FEISKYVIYK (86 aa)) are Cytoplasmic-facing. Tyrosine 19 bears the Phosphotyrosine; by SRC mark. Serine 20 and serine 23 each carry phosphoserine. Tyrosine 27 carries the post-translational modification Phosphotyrosine; by SRC. Residue serine 36 is modified to Phosphoserine. Positions 87–107 (FLTFFLAIPMAFAAGILFAIL) form an intramembrane region, helical. Over 108–162 (SCLHIWIIMPFVKTCLMVLPSVQTIWKTITDVVIAPLCTSVGRSFSSISLQLSHD) the chain is Cytoplasmic.

The protein belongs to the caveolin family. As to quaternary structure, monomer or homodimer. Interacts with CAV1; the interaction forms a stable heterooligomeric complex that is required for targeting to lipid rafts and for caveolae formation. Tyrosine phosphorylated forms do not form heterooligomers with the Tyr-19-phosphorylated form existing as a monomer or dimer, and the Tyr-27-form as a monomer only. Interacts (tyrosine phosphorylated form) with the SH2 domain-containing proteins, RASA1, NCK1 and SRC. Interacts (tyrosine phosphorylated form) with INSR, the interaction (Tyr-27-phosphorylated form) is increased on insulin stimulation. Interacts (Tyr-19 phosphorylated form) with MAPK1 (phosphorylated form); the interaction, promoted by insulin, leads to nuclear location and MAPK1 activation. Interacts with STAT3; the interaction is increased on insulin-induced tyrosine phosphorylation leading to STAT activation. In terms of processing, phosphorylated on serine and tyrosine residues. CAV1 promotes phosphorylation on Ser-23 which then targets the complex to the plasma membrane, lipid rafts and caveolae. Phosphorylation on Ser-36 appears to modulate mitosis in endothelial cells. Phosphorylation on both Tyr-19 and Tyr-27 is required for insulin-induced 'Ser-727' phosphorylation of STAT3 and its activation. Phosphorylation on Tyr-19 is required for insulin-induced phosphorylation of MAPK1 and DNA binding of STAT3. Tyrosine phosphorylation is induced by both EGF and insulin (By. similarity).

The protein localises to the nucleus. Its subcellular location is the cytoplasm. It is found in the golgi apparatus membrane. The protein resides in the cell membrane. It localises to the membrane. The protein localises to the caveola. In terms of biological role, may act as a scaffolding protein within caveolar membranes. Interacts directly with G-protein alpha subunits and can functionally regulate their activity. Acts as an accessory protein in conjunction with CAV1 in targeting to lipid rafts and driving caveolae formation. The Ser-36 phosphorylated form has a role in modulating mitosis in endothelial cells. Positive regulator of cellular mitogenesis of the MAPK signaling pathway. Required for the insulin-stimulated nuclear translocation and activation of MAPK1 and STAT3, and the subsequent regulation of cell cycle progression. The protein is Caveolin-2 (CAV2) of Mustela putorius furo (European domestic ferret).